A 420-amino-acid chain; its full sequence is Diaminobutyrate--2-oxoglutarate transaminase (420 aa).

An N6-(pyridoxal phosphate)lysine modification is found at lysine 271.

The protein belongs to the class-III pyridoxal-phosphate-dependent aminotransferase family. It depends on pyridoxal 5'-phosphate as a cofactor.

It catalyses the reaction L-2,4-diaminobutanoate + 2-oxoglutarate = L-aspartate 4-semialdehyde + L-glutamate. It participates in amine and polyamine biosynthesis; ectoine biosynthesis; L-ectoine from L-aspartate 4-semialdehyde: step 1/3. Its function is as follows. Catalyzes reversively the conversion of L-aspartate beta-semialdehyde (ASA) to L-2,4-diaminobutyrate (DABA) by transamination with L-glutamate. The chain is Diaminobutyrate--2-oxoglutarate transaminase (ectB) from Streptomyces anulatus (Streptomyces chrysomallus).